A 227-amino-acid chain; its full sequence is 7-cyano-7-deazaguanine synthase (227 aa).

ATP is bound at residue leucine 7–threonine 17. Zn(2+) contacts are provided by cysteine 187, cysteine 195, cysteine 198, and cysteine 201.

It belongs to the QueC family. It depends on Zn(2+) as a cofactor.

The catalysed reaction is 7-carboxy-7-deazaguanine + NH4(+) + ATP = 7-cyano-7-deazaguanine + ADP + phosphate + H2O + H(+). Its pathway is purine metabolism; 7-cyano-7-deazaguanine biosynthesis. Functionally, catalyzes the ATP-dependent conversion of 7-carboxy-7-deazaguanine (CDG) to 7-cyano-7-deazaguanine (preQ(0)). In Chlorobium luteolum (strain DSM 273 / BCRC 81028 / 2530) (Pelodictyon luteolum), this protein is 7-cyano-7-deazaguanine synthase.